Reading from the N-terminus, the 385-residue chain is Glucans biosynthesis protein C (385 aa).

10 consecutive transmembrane segments (helical) span residues 17–37 (AWLM…SHTW), 60–80 (MQVF…RYPL), 91–111 (VGIP…IMLQ), 137–157 (ISHL…VWIF), 173–193 (KFSM…YAVI), 212–232 (FIVM…LAFI), 239–259 (LFTT…VAYL), 274–294 (TESV…FSFG), 311–331 (ASLF…AYIT), and 338–358 (WLGF…LYEI).

It belongs to the acyltransferase 3 family. OpgC subfamily.

The protein localises to the cell membrane. Its pathway is glycan metabolism; osmoregulated periplasmic glucan (OPG) biosynthesis. In terms of biological role, necessary for the succinyl substitution of periplasmic glucans. Could catalyze the transfer of succinyl residues from the cytoplasmic side of the membrane to the nascent glucan backbones on the periplasmic side of the membrane. The protein is Glucans biosynthesis protein C of Escherichia coli O17:K52:H18 (strain UMN026 / ExPEC).